We begin with the raw amino-acid sequence, 96 residues long: MNIRPLHDKLIVERLEVENKSEGGIVLTSQSVKKSNRGKVVAVGLGRPLKNGDRARMEVKTGDQIIFNDGYGVKTEKVDGKEYLILSESDVLAIVE.

The protein belongs to the GroES chaperonin family. Heptamer of 7 subunits arranged in a ring. Interacts with the chaperonin GroEL.

It is found in the cytoplasm. In terms of biological role, together with the chaperonin GroEL, plays an essential role in assisting protein folding. The GroEL-GroES system forms a nano-cage that allows encapsulation of the non-native substrate proteins and provides a physical environment optimized to promote and accelerate protein folding. GroES binds to the apical surface of the GroEL ring, thereby capping the opening of the GroEL channel. In Vibrio cholerae serotype O1 (strain ATCC 39315 / El Tor Inaba N16961), this protein is Co-chaperonin GroES 2.